The chain runs to 255 residues: Kallikrein-15 (255 aa).

The first 15 residues, 1-15, serve as a signal peptide directing secretion; that stretch reads MWLLLPLSFLLTSTA. Positions 16–20 are cleaved as a propeptide — activation peptide; sequence QDGGK. The segment at 21–253 is serine protease; it reads LLEGEECAPH…YVKWIRETMK (233 aa). Cys-46 and Cys-62 are joined by a disulfide. Catalysis depends on charge relay system residues His-61 and Asp-105. 3 disulfide bridges follow: Cys-137–Cys-214, Cys-179–Cys-193, and Cys-204–Cys-229. The N-linked (GlcNAc...) asparagine glycan is linked to Asn-170. Catalysis depends on Ser-208, which acts as the Charge relay system. The N-linked (GlcNAc...) asparagine glycan is linked to Asn-231.

Belongs to the peptidase S1 family. Kallikrein subfamily.

The protein resides in the secreted. Its function is as follows. Protease whose physiological substrate is not yet known. This Saguinus oedipus (Cotton-top tamarin) protein is Kallikrein-15 (KLK15).